A 226-amino-acid chain; its full sequence is PKHD-type hydroxylase Pput_0892 (226 aa).

The region spanning 78 to 178 (KVFPPLINCY…RYAAFFWTQS (101 aa)) is the Fe2OG dioxygenase domain. Residues His96, Asp98, and His159 each coordinate Fe cation. Arg169 lines the 2-oxoglutarate pocket.

Fe(2+) serves as cofactor. Requires L-ascorbate as cofactor.

This is PKHD-type hydroxylase Pput_0892 from Pseudomonas putida (strain ATCC 700007 / DSM 6899 / JCM 31910 / BCRC 17059 / LMG 24140 / F1).